The chain runs to 725 residues: Ribonuclease R (725 aa).

Residues 236–559 enclose the RNB domain; sequence RKDLRDKLII…QLHRLIKQMV (324 aa). The 79-residue stretch at 611 to 689 folds into the S1 motif domain; sequence GKSLKAQIVS…NLGKVDVVLE (79 aa).

Belongs to the RNR ribonuclease family. RNase R subfamily.

It localises to the cytoplasm. The catalysed reaction is Exonucleolytic cleavage in the 3'- to 5'-direction to yield nucleoside 5'-phosphates.. In terms of biological role, 3'-5' exoribonuclease that releases 5'-nucleoside monophosphates and is involved in maturation of structured RNAs. The chain is Ribonuclease R from Mycoplasmopsis pulmonis (strain UAB CTIP) (Mycoplasma pulmonis).